A 95-amino-acid chain; its full sequence is Cell division protein FtsB (95 aa).

Topologically, residues Met-1–Leu-3 are cytoplasmic. The chain crosses the membrane as a helical span at residues Phe-4 to Phe-21. Residues Gly-22–Arg-95 are Periplasmic-facing. Positions Asp-28–Asp-62 form a coiled coil.

Belongs to the FtsB family. In terms of assembly, part of a complex composed of FtsB, FtsL and FtsQ.

The protein resides in the cell inner membrane. Essential cell division protein. May link together the upstream cell division proteins, which are predominantly cytoplasmic, with the downstream cell division proteins, which are predominantly periplasmic. The chain is Cell division protein FtsB from Mannheimia succiniciproducens (strain KCTC 0769BP / MBEL55E).